Consider the following 221-residue polypeptide: Transcription factor MYB1 (221 aa).

2 consecutive HTH myb-type domains span residues 1–57 and 58–112; these read MESV…LNYL and RPNI…QKKL. 2 DNA-binding regions (H-T-H motif) span residues 33 to 57 and 85 to 108; these read WHQV…LNYL and WSLI…NTHL. Residues 126–154 are disordered; it reads KTIVPKGTEAQPRAHPKSPPRPSPPSNNE.

In terms of tissue distribution, expressed in stems and leaves. Expressed at low levels in ovaries.

The protein resides in the nucleus. Transcription activator involved in the regulation of anthocyanin biosynthesis in red-fleshed kiwifruit varieties. Activates the transcription of genes involved in anthocyanin biosynthesis, such as dihydroflavonol reductase (DFR), anthocyanidin synthase (ANS) and UDP flavonoid glycosyltransferase (UFGT). This chain is Transcription factor MYB1, found in Actinidia chinensis var. chinensis (Chinese soft-hair kiwi).